The following is a 715-amino-acid chain: Fatty acid oxidation complex subunit alpha (715 aa).

Residues 1–190 (MIYEGKAITV…KVGAVDAVVA (190 aa)) form an enoyl-CoA hydratase/isomerase region. Residue D297 participates in substrate binding. A 3-hydroxyacyl-CoA dehydrogenase region spans residues 312-715 (KDVKQAAVLG…MAKNGQSFFG (404 aa)). Residues M325, D344, 401 to 403 (VVE), K408, and S430 each bind NAD(+). The active-site For 3-hydroxyacyl-CoA dehydrogenase activity is H451. N454 serves as a coordination point for NAD(+). Residues N501 and Y660 each coordinate substrate.

In the N-terminal section; belongs to the enoyl-CoA hydratase/isomerase family. The protein in the C-terminal section; belongs to the 3-hydroxyacyl-CoA dehydrogenase family. Heterotetramer of two alpha chains (FadB) and two beta chains (FadA).

The catalysed reaction is a (3S)-3-hydroxyacyl-CoA + NAD(+) = a 3-oxoacyl-CoA + NADH + H(+). It carries out the reaction a (3S)-3-hydroxyacyl-CoA = a (2E)-enoyl-CoA + H2O. It catalyses the reaction a 4-saturated-(3S)-3-hydroxyacyl-CoA = a (3E)-enoyl-CoA + H2O. The enzyme catalyses (3S)-3-hydroxybutanoyl-CoA = (3R)-3-hydroxybutanoyl-CoA. The catalysed reaction is a (3Z)-enoyl-CoA = a 4-saturated (2E)-enoyl-CoA. It carries out the reaction a (3E)-enoyl-CoA = a 4-saturated (2E)-enoyl-CoA. It functions in the pathway lipid metabolism; fatty acid beta-oxidation. Its function is as follows. Involved in the aerobic and anaerobic degradation of long-chain fatty acids via beta-oxidation cycle. Catalyzes the formation of 3-oxoacyl-CoA from enoyl-CoA via L-3-hydroxyacyl-CoA. It can also use D-3-hydroxyacyl-CoA and cis-3-enoyl-CoA as substrate. The chain is Fatty acid oxidation complex subunit alpha from Pseudomonas fluorescens (strain Pf0-1).